We begin with the raw amino-acid sequence, 706 residues long: SPX domain-containing membrane protein Os09g0521800 (706 aa).

In terms of domain architecture, SPX spans 2-145 (VNFSNKLTKD…GYKFTDYYVR (144 aa)). The next 6 membrane-spanning stretches (helical) occupy residues 251–271 (MSLV…YIVV), 281–301 (LGAA…AQVF), 318–338 (LLFS…AFDL), 340–359 (SLTI…ARAV), 378–398 (AAFV…AGLL), and 414–434 (LPGW…WILF). Residues 475–498 (SEQDEEDDNGDEEHNETLSSSTTT) form a disordered region. A compositionally biased stretch (acidic residues) spans 476 to 488 (EQDEEDDNGDEEH). Helical transmembrane passes span 520–540 (LLIY…SSVV), 554–574 (VFLA…GTYI), 583–603 (ILVA…KLTV), 611–631 (VCSA…NLSL), and 678–698 (LLNA…AATL).

It belongs to the major facilitator superfamily.

It localises to the membrane. The sequence is that of SPX domain-containing membrane protein Os09g0521800 from Oryza sativa subsp. japonica (Rice).